The sequence spans 178 residues: Ribosome maturation factor RimM (178 aa).

Positions 99 to 178 (EGDFYWHDLI…TIEVDWDAGF (80 aa)) constitute a PRC barrel domain.

The protein belongs to the RimM family. Binds ribosomal protein uS19.

Its subcellular location is the cytoplasm. Functionally, an accessory protein needed during the final step in the assembly of 30S ribosomal subunit, possibly for assembly of the head region. Essential for efficient processing of 16S rRNA. May be needed both before and after RbfA during the maturation of 16S rRNA. It has affinity for free ribosomal 30S subunits but not for 70S ribosomes. The polypeptide is Ribosome maturation factor RimM (Mannheimia succiniciproducens (strain KCTC 0769BP / MBEL55E)).